The sequence spans 1324 residues: RNA2 polyprotein (1324 aa).

It belongs to the nepoviruses RNA2 polyprotein family. In terms of processing, specific enzymatic cleavages in vivo by the P1 encoded 3C-like protease yield mature proteins. Post-translationally, the N-terminus of the coat protein is blocked.

It is found in the host cell junction. The protein localises to the host plasmodesma. It localises to the host cytoplasm. Its subcellular location is the host nucleus. The protein resides in the virion. In terms of biological role, implicated in RNA2 replication. Could also be required for nematode transmission of the virus. Functionally, transports viral genome to neighboring plant cells directly through plasmosdesmata, without any budding. The movement protein allows efficient cell to cell propagation, by bypassing the host cell wall barrier. Acts by forming a tubular structure at the host plasmodesmata, enlarging it enough to allow free passage of virion capsids. This chain is RNA2 polyprotein, found in Apium graveolens (Celery).